The primary structure comprises 61 residues: Small ribosomal subunit protein uS14 (61 aa).

Residues C24, C27, C40, and C43 each contribute to the Zn(2+) site.

It belongs to the universal ribosomal protein uS14 family. Zinc-binding uS14 subfamily. Part of the 30S ribosomal subunit. Contacts proteins S3 and S10. Requires Zn(2+) as cofactor.

Its function is as follows. Binds 16S rRNA, required for the assembly of 30S particles and may also be responsible for determining the conformation of the 16S rRNA at the A site. The polypeptide is Small ribosomal subunit protein uS14 (Brevibacillus brevis (strain 47 / JCM 6285 / NBRC 100599)).